Reading from the N-terminus, the 579-residue chain is Small conductance calcium-activated potassium channel protein 2 (579 aa).

2 disordered regions span residues 1-54 (MSSC…AAAA) and 90-115 (TGGG…KKNQ). The segment covering 90–103 (TGGGGGGGGSGHGS) has biased composition (gly residues). A helical membrane pass occupies residues 138 to 158 (ALIFGMFGIVVMVIETELSWG). Y160 carries the post-translational modification Phosphotyrosine. A helical transmembrane segment spans residues 168–188 (LALKCLISLSTIILLGLIIVY). Residues 214–234 (IFFICLEILVCAIHPIPGNYT) form a helical membrane-spanning segment. Residues 256–276 (IILSIPMFLRLYLIARVMLLH) traverse the membrane as a helical segment. The chain crosses the membrane as a helical span at residues 305–325 (LMTICPGTVLLVFSISLWIIA). An intramembrane region (pore-forming) is located at residues 345–365 (FLGAMWLISITFLSIGYGDMV). Residues 374–394 (VCLLTGIMGAGCTALVVAVVA) form a helical membrane-spanning segment. The interval 412–488 (DTQLTKRVKN…LVDLAKTQNI (77 aa)) is calmodulin-binding. The disordered stretch occupies residues 551 to 579 (VTYNAERSRSSSRRRRSSSTAPPTSSESS). Over residues 568 to 579 (SSTAPPTSSESS) the composition is skewed to low complexity.

Belongs to the potassium channel KCNN family. KCa2.2/KCNN2 subfamily. In terms of assembly, homodimer. Heteromultimer with KCNN1 and KCNN3. The complex is composed of 4 channel subunits each of which binds to a calmodulin subunit which regulates the channel activity through calcium-binding. Interacts (via N-terminal domain) with MPP2. Expressed in atrial myocytes (at protein level). Widely expressed.

It localises to the membrane. Its subcellular location is the cytoplasm. The protein resides in the myofibril. The protein localises to the sarcomere. It is found in the z line. It catalyses the reaction K(+)(in) = K(+)(out). With respect to regulation, inhibited by bee venom neurotoxin apamin. Inhibited by UCL 1684 and tetraethylammonium (TEA). Small conductance calcium-activated potassium channel that mediates the voltage-independent transmembrane transfer of potassium across the cell membrane through a constitutive interaction with calmodulin which binds the intracellular calcium allowing its opening. The current is characterized by a voltage-independent activation, an intracellular calcium concentration increase-dependent activation and a single-channel conductance of about 3 picosiemens. Also presents an inwardly rectifying current, thus reducing its already small outward conductance of potassium ions, which is particularly the case when the membrane potential displays positive values, above + 20 mV. The inward rectification could be due to a blockade of the outward current by intracellular divalent cations such as calcium and magnesium and could also be due to an intrinsic property of the channel pore, independent of intracellular divalent ions. There are three positively charged amino acids in the S6 transmembrane domain, close to the pore, that collectively control the conductance and rectification through an electrostatic mechanism. Additionally, electrostatic contributions from these residues also play an important role in determining the intrinsic open probability of the channel in the absence of calcium, affecting the apparent calcium affinity for activation. Forms an heteromeric complex with calmodulin, which is constitutively associated in a calcium-independent manner. Channel opening is triggered when calcium binds the calmodulin resulting in a rotary movement leading to the formation of the dimeric complex to open the gate. Plays a role in the repolarization phase of cardiac action potential. This chain is Small conductance calcium-activated potassium channel protein 2, found in Homo sapiens (Human).